Here is a 397-residue protein sequence, read N- to C-terminus: MSWLFPLAKSASSSAAGSPAGLTSLQQQKQRLIESLRNSHSSIAEIQKDVEYRLPFTVNNLTININILLPPQFPQEKPVISVYPPIRHHLMDSQGLYVTSPLVSNFTMHSDLGKIIQSLLDEFWKNPPVLAPTSTTFPYLYSNPGGMPPYPSQGFPFLPPYPPPEANRNITSLSVADTVSSSTTSYTAAKPVAPSFGILSSLPLPVPTTESSASVNQNGFGYKMPDIPDAFPELSELSVSQLTDMNEQEEVLLEQFLMLPQLKQIITDKEDLVKNIEELARKNLLLEHSLEGKRQTVLDKYELLLQMKSTFEKKMQRQHELSESCSASALQARLKVAAHEAEEESDNIAEDFLEGKTEIDDFLNSFKEKRTICHCRRAKEEKLHQVIAMHSQFHAPL.

A Phosphoserine modification is found at Ser-18. The region spanning 308-397 is the VPS37 C-terminal domain; sequence KSTFEKKMQR…AMHSQFHAPL (90 aa).

This sequence belongs to the VPS37 family. Component of the ESCRT-I complex (endosomal sorting complex required for transport I) which consists of TSG101, VPS28, a VPS37 protein (VPS37A to -D) and MVB12A or MVB12B in a 1:1:1:1 stoichiometry. Interacts with TSG101, VPS28 and HGS. Component of an ESCRT-I complex (endosomal sorting complex required for transport I) which consists of TSG101, VPS28, VPS37A and UBAP1 in a 1:1:1:1 stoichiometry.

It is found in the late endosome membrane. The protein resides in the nucleus. Its function is as follows. Component of the ESCRT-I complex, a regulator of vesicular trafficking process. Required for the sorting of endocytic ubiquitinated cargos into multivesicular bodies. May be involved in cell growth and differentiation. The sequence is that of Vacuolar protein sorting-associated protein 37A (Vps37a) from Mus musculus (Mouse).